Reading from the N-terminus, the 145-residue chain is Bacilliredoxin SAOUHSC_01610 (145 aa).

Belongs to the bacilliredoxin family.

The polypeptide is Bacilliredoxin SAOUHSC_01610 (Staphylococcus aureus (strain NCTC 8325 / PS 47)).